The following is a 291-amino-acid chain: Tumor necrosis factor ligand superfamily member 10 (291 aa).

Residues 1-17 are Cytoplasmic-facing; it reads MPSSGALKDLSFSQHFR. A helical; Signal-anchor for type II membrane protein transmembrane segment spans residues 18 to 38; the sequence is MMVICIVLLQVLLQAVSVAVT. Over 39–291 the chain is Extracellular; that stretch reads YMYFTNEMKQ…ASFFGAFLIN (253 aa). N-linked (GlcNAc...) asparagine glycosylation occurs at Asn-52. Positions 126–290 constitute a THD domain; it reads VAAHITGITR…EASFFGAFLI (165 aa). Residue Cys-240 coordinates Zn(2+).

The protein belongs to the tumor necrosis factor family. In terms of assembly, homotrimer. One TNFSF10 homotrimer interacts with three TNFSF10A mononers. One TNFSF10 homotrimer interacts with three TNFSF10B mononers. Post-translationally, tyrosine phosphorylated by PKDCC/VLK. Widespread.

It localises to the cell membrane. Its subcellular location is the secreted. Cytokine that binds to TNFRSF10A/TRAILR1, TNFRSF10B/TRAILR2, TNFRSF10C/TRAILR3, TNFRSF10D/TRAILR4 and possibly also to TNFRSF11B/OPG. Induces apoptosis. Its activity may be modulated by binding to the decoy receptors TNFRSF10C/TRAILR3, TNFRSF10D/TRAILR4 and TNFRSF11B/OPG that cannot induce apoptosis. The chain is Tumor necrosis factor ligand superfamily member 10 (Tnfsf10) from Mus musculus (Mouse).